The chain runs to 436 residues: Cytochrome b5-related protein (436 aa).

In terms of domain architecture, Cytochrome b5 heme-binding spans P16–A100. Heme contacts are provided by H59 and H82.

As to expression, muscle.

In terms of biological role, may play a role in muscle cell metabolism. The chain is Cytochrome b5-related protein (Cyt-b5-r) from Drosophila melanogaster (Fruit fly).